The chain runs to 185 residues: Ribosome-recycling factor (185 aa).

The protein belongs to the RRF family.

The protein resides in the cytoplasm. Responsible for the release of ribosomes from messenger RNA at the termination of protein biosynthesis. May increase the efficiency of translation by recycling ribosomes from one round of translation to another. The polypeptide is Ribosome-recycling factor (Vesicomyosocius okutanii subsp. Calyptogena okutanii (strain HA)).